Consider the following 415-residue polypeptide: Serine hydroxymethyltransferase (415 aa).

(6S)-5,6,7,8-tetrahydrofolate contacts are provided by residues leucine 119 and 123–125 (GHL). The residue at position 228 (lysine 228) is an N6-(pyridoxal phosphate)lysine. Residue 353–355 (SPF) coordinates (6S)-5,6,7,8-tetrahydrofolate.

It belongs to the SHMT family. Homodimer. Pyridoxal 5'-phosphate is required as a cofactor.

It localises to the cytoplasm. It carries out the reaction (6R)-5,10-methylene-5,6,7,8-tetrahydrofolate + glycine + H2O = (6S)-5,6,7,8-tetrahydrofolate + L-serine. Its pathway is one-carbon metabolism; tetrahydrofolate interconversion. It functions in the pathway amino-acid biosynthesis; glycine biosynthesis; glycine from L-serine: step 1/1. Catalyzes the reversible interconversion of serine and glycine with tetrahydrofolate (THF) serving as the one-carbon carrier. Also exhibits THF-independent aldolase activity toward beta-hydroxyamino acids, producing glycine and aldehydes, via a retro-aldol mechanism. This Halorubrum lacusprofundi (strain ATCC 49239 / DSM 5036 / JCM 8891 / ACAM 34) protein is Serine hydroxymethyltransferase.